We begin with the raw amino-acid sequence, 118 residues long: DNA-directed RNA polymerase subunit omega (118 aa).

Belongs to the RNA polymerase subunit omega family. As to quaternary structure, the RNAP catalytic core consists of 2 alpha, 1 beta, 1 beta' and 1 omega subunit. When a sigma factor is associated with the core the holoenzyme is formed, which can initiate transcription.

The catalysed reaction is RNA(n) + a ribonucleoside 5'-triphosphate = RNA(n+1) + diphosphate. Promotes RNA polymerase assembly. Latches the N- and C-terminal regions of the beta' subunit thereby facilitating its interaction with the beta and alpha subunits. This Paracoccus denitrificans (strain Pd 1222) protein is DNA-directed RNA polymerase subunit omega.